Consider the following 564-residue polypeptide: Formate--tetrahydrofolate ligase (564 aa).

65–72 (TPLGEGKT) is an ATP binding site.

The protein belongs to the formate--tetrahydrofolate ligase family.

It carries out the reaction (6S)-5,6,7,8-tetrahydrofolate + formate + ATP = (6R)-10-formyltetrahydrofolate + ADP + phosphate. Its pathway is one-carbon metabolism; tetrahydrofolate interconversion. The sequence is that of Formate--tetrahydrofolate ligase from Roseiflexus castenholzii (strain DSM 13941 / HLO8).